The sequence spans 134 residues: Translation initiation factor 2 subunit beta (134 aa).

The segment covering Met-1 to Glu-12 has biased composition (basic and acidic residues). The interval Met-1–Arg-32 is disordered.

This sequence belongs to the eIF-2-beta/eIF-5 family. In terms of assembly, heterotrimer composed of an alpha, a beta and a gamma chain.

Functionally, eIF-2 functions in the early steps of protein synthesis by forming a ternary complex with GTP and initiator tRNA. The sequence is that of Translation initiation factor 2 subunit beta from Natronomonas pharaonis (strain ATCC 35678 / DSM 2160 / CIP 103997 / JCM 8858 / NBRC 14720 / NCIMB 2260 / Gabara) (Halobacterium pharaonis).